A 54-amino-acid chain; its full sequence is Putative ankyrin repeat protein RC0701 (54 aa).

An ANK repeat occupies 17–46 (SGKTPLDWYSDYNATKIVETLIKNGGNVSS).

This chain is Putative ankyrin repeat protein RC0701, found in Rickettsia conorii (strain ATCC VR-613 / Malish 7).